The primary structure comprises 187 residues: Protein GrpE (187 aa).

Residues 1 to 15 (MKETKQEEMEVREDC) are compositionally biased toward basic and acidic residues. The tract at residues 1–40 (MKETKQEEMEVREDCESVDSNLEATVEEMESTKGTSEDLE) is disordered.

Belongs to the GrpE family. As to quaternary structure, homodimer.

The protein localises to the cytoplasm. In terms of biological role, participates actively in the response to hyperosmotic and heat shock by preventing the aggregation of stress-denatured proteins, in association with DnaK and GrpE. It is the nucleotide exchange factor for DnaK and may function as a thermosensor. Unfolded proteins bind initially to DnaJ; upon interaction with the DnaJ-bound protein, DnaK hydrolyzes its bound ATP, resulting in the formation of a stable complex. GrpE releases ADP from DnaK; ATP binding to DnaK triggers the release of the substrate protein, thus completing the reaction cycle. Several rounds of ATP-dependent interactions between DnaJ, DnaK and GrpE are required for fully efficient folding. The chain is Protein GrpE from Alkaliphilus oremlandii (strain OhILAs) (Clostridium oremlandii (strain OhILAs)).